Reading from the N-terminus, the 156-residue chain is Small ribosomal subunit protein uS7 (156 aa).

It belongs to the universal ribosomal protein uS7 family. Part of the 30S ribosomal subunit. Contacts proteins S9 and S11.

Its function is as follows. One of the primary rRNA binding proteins, it binds directly to 16S rRNA where it nucleates assembly of the head domain of the 30S subunit. Is located at the subunit interface close to the decoding center, probably blocks exit of the E-site tRNA. This Beutenbergia cavernae (strain ATCC BAA-8 / DSM 12333 / CCUG 43141 / JCM 11478 / NBRC 16432 / NCIMB 13614 / HKI 0122) protein is Small ribosomal subunit protein uS7.